A 288-amino-acid polypeptide reads, in one-letter code: Urease accessory protein UreD (288 aa).

The protein belongs to the UreD family. In terms of assembly, ureD, UreF and UreG form a complex that acts as a GTP-hydrolysis-dependent molecular chaperone, activating the urease apoprotein by helping to assemble the nickel containing metallocenter of UreC. The UreE protein probably delivers the nickel.

The protein localises to the cytoplasm. In terms of biological role, required for maturation of urease via the functional incorporation of the urease nickel metallocenter. This is Urease accessory protein UreD from Dechloromonas aromatica (strain RCB).